The sequence spans 948 residues: Hexagonally packed intermediate-layer surface protein (948 aa).

The first 17 residues, 1–17 (MKKNIALMALTGILTLA), serve as a signal peptide directing secretion. 2 disulfides stabilise this stretch: Cys168-Cys187 and Cys554-Cys666.

Glycosylated. Contains tightly bound reducing sugars (six per polypeptide chain) and fatty acids (covalently bound and located in the N-terminal region).

Its subcellular location is the secreted. The protein localises to the cell wall. It localises to the S-layer. Functionally, shape maintenance, possible protection from noxious enzymes or exogenous and unsettling DNA, and may mediate homotypic cell-cell contacts. This Deinococcus radiodurans (strain ATCC 13939 / DSM 20539 / JCM 16871 / CCUG 27074 / LMG 4051 / NBRC 15346 / NCIMB 9279 / VKM B-1422 / R1) protein is Hexagonally packed intermediate-layer surface protein (hpi).